A 1365-amino-acid polypeptide reads, in one-letter code: ATP-dependent RNA helicase DHX29 (1365 aa).

Basic residues predominate over residues 1–10; it reads MGGKNKKHKA. 3 disordered regions span residues 1-74, 174-222, and 235-257; these read MGGK…NDSG, SQEF…EETT, and AEQQDEEEKGEGSKGLEEEEKFD. Composition is skewed to low complexity over residues 11-36 and 43-53; these read PGAAAMRAAVSASRARSAEAGAVGEA and ARPAPAVPTGA. Ser69, Ser190, and Ser198 each carry phosphoserine. The span at 187–203 shows a compositional bias: polar residues; sequence KFQSVQIQATLSPPQQT. Residues 206–222 are compositionally biased toward basic and acidic residues; that stretch reads KRQEEDPKIKPKKEETT. A coiled-coil region spans residues 281–308; the sequence is LEKNKQGQKEAQEKIRKFQREMETLEDH. The segment at 500–524 is disordered; sequence QQQQQQQQRPESEKGGSEDPEESWE. One can recognise a Helicase ATP-binding domain in the interval 581–754; the sequence is VETLKRHRVV…FTHCPILRIS (174 aa). 594–601 provides a ligand contact to ATP; it reads GETGSGKS. Positions 701–704 match the DEAH box motif; it reads DEVH. The Helicase C-terminal domain maps to 848-1025; it reads LILELLVYLD…ELCLHIMKCD (178 aa).

The protein belongs to the DEAD box helicase family. DEAH subfamily. Part of the 43S pre-initiation complex (PIC) that contains at least Met-tRNA, EIF1, EIF1A (EIF1AX or EIF1AY), EIF2S1, EIF2S2, EIF2S3, EIF3A, EIF3B, EIF3C, EIF3D, EIF3E, EIF3F, EIF3G, EIF3H, EIF3I, EIF3J, EIF3K, EIF3L, EIF3M, DHX29 and the 40S ribosomal subunit.

It is found in the cytoplasm. The catalysed reaction is ATP + H2O = ADP + phosphate + H(+). In terms of biological role, ATP-binding RNA helicase involved in translation initiation. Part of the 43S pre-initiation complex that is required for efficient initiation on mRNAs of higher eukaryotes with structured 5'-UTRs by promoting efficient NTPase-dependent 48S complex formation. Specifically binds to the 40S ribosome near the mRNA entrance. Does not possess a processive helicase activity. This chain is ATP-dependent RNA helicase DHX29, found in Mus musculus (Mouse).